A 441-amino-acid polypeptide reads, in one-letter code: Tol-Pal system protein TolB (441 aa).

An N-terminal signal peptide occupies residues 1 to 39; sequence MPTMTPAFSRASLSEALRSYGLALLLFLATLLAWQPAHA.

The protein belongs to the TolB family. The Tol-Pal system is composed of five core proteins: the inner membrane proteins TolA, TolQ and TolR, the periplasmic protein TolB and the outer membrane protein Pal. They form a network linking the inner and outer membranes and the peptidoglycan layer.

It is found in the periplasm. In terms of biological role, part of the Tol-Pal system, which plays a role in outer membrane invagination during cell division and is important for maintaining outer membrane integrity. The chain is Tol-Pal system protein TolB from Bordetella avium (strain 197N).